The following is a 560-amino-acid chain: OTU domain-containing protein 5-A (560 aa).

Disordered regions lie at residues 1-100 (MTIL…MACV) and 141-190 (GGGT…QSED). The span at 17 to 32 (DHPDDPDRRTGSDPHQ) shows a compositional bias: basic and acidic residues. Positions 141 to 163 (GGGTGPGAAGGGGGGGGGGGVGG) are enriched in gly residues. An OTU domain is found at 211 to 334 (FVIKKMKEDG…NIHYNSVVNP (124 aa)). The segment at 216–222 (MKEDGAC) is cys-loop. Asp219 is an active-site residue. Cys222 (nucleophile) is an active-site residue. Residues 271–281 (KRKNNCHGNHI) form a variable-loop region. A his-loop region spans residues 322–327 (YHRNIH). Residue His327 is part of the active site. Residues 411-496 (ARQPRKASAT…ACVGPDRPTS (86 aa)) form a disordered region. Low complexity-rich tracts occupy residues 417–430 (ASAT…AASS) and 437–448 (ARSPRQRSSAPS).

The protein belongs to the peptidase C85 family.

The enzyme catalyses Thiol-dependent hydrolysis of ester, thioester, amide, peptide and isopeptide bonds formed by the C-terminal Gly of ubiquitin (a 76-residue protein attached to proteins as an intracellular targeting signal).. In terms of biological role, deubiquitinating enzyme that may function as negative regulator of the innate immune system. Has peptidase activity towards 'Lys-48'- and 'Lys-63'-linked polyubiquitin chains. Can also cleave 'Lys-11'-linked ubiquitin chains (in vitro). The sequence is that of OTU domain-containing protein 5-A (otud5a) from Danio rerio (Zebrafish).